A 197-amino-acid polypeptide reads, in one-letter code: uncharacterized protein (197 aa).

Transmembrane regions (helical) follow at residues 9–29, 67–87, 104–124, and 160–180; these read IYIL…RFIL, LASL…ILML, IIAV…ISVI, and GLDL…MLVI.

It belongs to the YggT family.

It localises to the cell membrane. This is an uncharacterized protein from Pseudomonas aeruginosa (strain ATCC 15692 / DSM 22644 / CIP 104116 / JCM 14847 / LMG 12228 / 1C / PRS 101 / PAO1).